Consider the following 355-residue polypeptide: Putative beta-lactamase HcpE (355 aa).

The N-terminal stretch at 1-22 (MGVKFLKILVCGLFFWSLNAHL) is a signal peptide. TPR repeat units follow at residues 27-60 (DNSF…GVSE), 63-96 (TQLG…DDRE), 98-131 (CFGL…LKHP), 132-166 (ESCY…DMAK), 202-240 (GQAC…NNSG), 245-275 (LGSM…MGSA), 276-311 (VSCS…MGDE), and 312-344 (VGCF…GMKQ). Intrachain disulfides connect Cys-54–Cys-62, Cys-90–Cys-98, Cys-126–Cys-134, Cys-160–Cys-168, Cys-197–Cys-205, Cys-234–Cys-242, Cys-270–Cys-278, Cys-306–Cys-314, and Cys-338–Cys-346.

This sequence belongs to the hcp beta-lactamase family.

Its subcellular location is the secreted. It catalyses the reaction a beta-lactam + H2O = a substituted beta-amino acid. In terms of biological role, may hydrolyze 6-aminopenicillinic acid and 7-aminocephalosporanic acid (ACA) derivatives. This is Putative beta-lactamase HcpE (hcpE) from Helicobacter pylori (strain ATCC 700392 / 26695) (Campylobacter pylori).